Reading from the N-terminus, the 351-residue chain is Phosphate acyltransferase (351 aa).

The protein belongs to the PlsX family. Homodimer. Probably interacts with PlsY.

The protein resides in the cytoplasm. The catalysed reaction is a fatty acyl-[ACP] + phosphate = an acyl phosphate + holo-[ACP]. It functions in the pathway lipid metabolism; phospholipid metabolism. Functionally, catalyzes the reversible formation of acyl-phosphate (acyl-PO(4)) from acyl-[acyl-carrier-protein] (acyl-ACP). This enzyme utilizes acyl-ACP as fatty acyl donor, but not acyl-CoA. The sequence is that of Phosphate acyltransferase from Neisseria meningitidis serogroup A / serotype 4A (strain DSM 15465 / Z2491).